A 1223-amino-acid polypeptide reads, in one-letter code: MKFGKTFANHRIPEWSSQYVGYKSLKKMIKEITRLQEDIYRAHNKNSYDEGRPPTKMRDSSNSAQNYLDSPKIQKLLASFFFAVDRDIEKVDTFYNSQYAEYKKRFERLLSSNQFNEIKSTLVVDANKEDAVAQTLLTKDTREMNMLLKGTSQASRLSYHKDDLIEIQSILAELRKQFRNLKWYAELNKRAFGKILKKLDKKVGTNQQMSTMKTRILPLQFANDSLITKDLSLLKTIWEQVTFRINSYERVMRSTSPNANANDNTEFFKIICVFIEEDDSKGLIRELTNLYSELSLIPTRIMISVLNKAALSKSLACIDAILKVIPSLNDSEDINRRNFFHHHIIAIGKLIRKQEILSRKKKSQPSKYTNSEGEIVTDLRTLHTTLSAPAESDSITEEEKSSACTLSYILEELPIHLRPCLFQHDNYKRTPLHYSCQYGLSEVTKLIIKLMKEWNIWNEIPIDDVSAFGDAESLTPLHLCVLGAHPKTTEVLLQSLDPNVKLKSSSLLHLATEWNNYPLLHVLLSSKRFDINYQDNELHETPLYLACRLNFFEAAVCLLYNGADLEIREKLFGWTAIFVAAAEGFTDIVKLLIANNANFDIEDEGGWTPMEHAVLRGHLHIADMVQIRDELVTHPHSQLNSGSEEKEPLNEISAGELNERNENGNGGNKGSLGKLAGPIKSYGHRFLDNNESLILITLGSNDTRNKSPSISLSSEALAKVIGLETDCALSLVISCNDSIDKSSVILDLPLDDNVDAVDFKVPFKVDYSHTLYFDIVPTYGTRSLETHNRIDCQKNNNNYVMARGVSMLNKSYSSVGVNRSILNGSVTVPIIANHTLEILGTLKFEYIIITPFEHPQLPLERTETYWKSLVSTRVIGHRGLGKNNPNKSLQIGENTVESFIMAASLGASYVEFDVQLTKDNVPVVYHDFLVAETGVDIPMHELTLEQFLDLNNADKEHIQRGAGHSPHHVNGADTALQKYRGRSVDDSDVSTLRRAWDLHDNDPNGKSNNAHWSDNRMRLTKTFKKNNFKGNARGHSIASSFVTLKELFKKIPANVGFNIECKFPMLDEAEEEELGQIMMEMNHWVDTVLKVVFDNANGRDIIFSSFHPDICIMLSLKQPVIPILFLTEGGSEQMADLRASSLQNGIRFAKKWNLLGIVSAAAPILKAPRLVQVVKSNGLVCVTYGVDNNDPENASIQIEAGVDAVIVDSVLAIRRGLTKKNEK.

One can recognise an SPX domain in the interval 1 to 213 (MKFGKTFANH…GTNQQMSTMK (213 aa)). A compositionally biased stretch (basic and acidic residues) spans 43 to 59 (HNKNSYDEGRPPTKMRD). The interval 43–64 (HNKNSYDEGRPPTKMRDSSNSA) is disordered. ANK repeat units follow at residues 427 to 456 (YKRTPLHYSCQYGLSEVTKLIIKLMKEWNI), 472 to 502 (ESLTPLHLCVLGAHPKTTEVLLQSLDPNVKL), 504 to 533 (SSSLLHLATEWNNYPLLHVLLSSKRFDINY), 538 to 567 (LHETPLYLACRLNFFEAAVCLLYNGADLEI), 572 to 601 (FGWTAIFVAAAEGFTDIVKLLIANNANFDI), and 605 to 634 (GGWTPMEHAVLRGHLHIADMVQIRDELVTH). Position 653 is a phosphoserine (serine 653). The 346-residue stretch at 872–1217 (TRVIGHRGLG…DSVLAIRRGL (346 aa)) folds into the GP-PDE domain. 3 residues coordinate a divalent metal cation: glutamate 911, aspartate 913, and histidine 926. The residue at position 983 (serine 983) is a Phosphoserine.

Belongs to the GDE1 family. The cofactor is a divalent metal cation.

Its subcellular location is the cytoplasm. It carries out the reaction sn-glycerol 3-phosphocholine + H2O = sn-glycerol 3-phosphate + choline + H(+). The enzyme catalyses sn-glycero-3-phospho-1D-myo-inositol + H2O = myo-inositol + sn-glycerol 3-phosphate + H(+). In terms of biological role, glycerophosphocholine glycerophosphodiesterase responsible for the hydrolysis of intracellular glycerophosphocholine into glycerol-phosphate and choline. The choline is used for phosphatidyl-choline synthesis. Required for utilization of glycerophosphocholine as phosphate source. May also use glycerophosphoinositol as substrate in vivo. This Saccharomyces cerevisiae (strain ATCC 204508 / S288c) (Baker's yeast) protein is Glycerophosphocholine phosphodiesterase GDE1.